Reading from the N-terminus, the 799-residue chain is Elongation factor G, mitochondrial (799 aa).

The transit peptide at 1–24 (MRCPSLARLPHRAVSGLTRTPVRF) directs the protein to the mitochondrion. Residues 97–384 (SRVRNIGIAA…GVIDYLPNPS (288 aa)) enclose the tr-type G domain. GTP is bound by residues 106–113 (AHIDSGKT), 182–186 (DTPGH), and 236–239 (NKMD).

This sequence belongs to the TRAFAC class translation factor GTPase superfamily. Classic translation factor GTPase family. EF-G/EF-2 subfamily.

It localises to the mitochondrion. The protein operates within protein biosynthesis; polypeptide chain elongation. Mitochondrial GTPase that catalyzes the GTP-dependent ribosomal translocation step during translation elongation. During this step, the ribosome changes from the pre-translocational (PRE) to the post-translocational (POST) state as the newly formed A-site-bound peptidyl-tRNA and P-site-bound deacylated tRNA move to the P and E sites, respectively. Catalyzes the coordinated movement of the two tRNA molecules, the mRNA and conformational changes in the ribosome. The sequence is that of Elongation factor G, mitochondrial (mef1) from Emericella nidulans (strain FGSC A4 / ATCC 38163 / CBS 112.46 / NRRL 194 / M139) (Aspergillus nidulans).